The primary structure comprises 1158 residues: Type IV pilus biogenesis factor PilY1 (1158 aa).

Residues 1–29 (MIHQITRAGKSLLAAGCTLSILFASDSYA) form the signal peptide. The Ca(2+) site is built by Asp841, Asn843, Asp845, Ile847, and Asp849.

Belongs to the PilY1 family.

Its subcellular location is the fimbrium. The protein localises to the membrane. It is found in the cytoplasm. It localises to the cytosol. In terms of biological role, involved in pilus assembly, twitching motility and adhesion to host cells. Primes type IV pili (T4P) assembly and is required for inclusion of minor pilins PilV, PilW and PilX to the surface pili. Stabilizes assembled pilus fibers likely by antagonizing retraction mediated by PilT. Calcium-binding and calcium release by PilY1 seem to be essential for twitching motility and for regulation of pilus retraction dynamics of PilT. Regulates surface-activated virulence possibly by acting as a surface-attachment mechanosensor. This Pseudomonas aeruginosa (strain UCBPP-PA14) protein is Type IV pilus biogenesis factor PilY1.